A 384-amino-acid chain; its full sequence is Dual specificity protein phosphatase 9 (384 aa).

Phosphoserine is present on Ser-16. One can recognise a Rhodanese domain in the interval 18 to 139 (PRPRLLLLDC…FQAECPHLCE (122 aa)). Positions 203–346 (FPVQILPNLY…LLDFERSLRL (144 aa)) constitute a Tyrosine-protein phosphatase domain. Ser-262 carries the post-translational modification Phosphoserine. Residue Cys-290 is the Phosphocysteine intermediate of the active site. The tract at residues 348–384 (ERHSQEQGSGGQASAASNPPSFFTTPTSDGAFELAPT) is disordered. Phosphoserine is present on Ser-351. Over residues 359 to 375 (QASAASNPPSFFTTPTS) the composition is skewed to polar residues.

Belongs to the protein-tyrosine phosphatase family. Non-receptor class dual specificity subfamily.

Its subcellular location is the cytoplasm. It carries out the reaction O-phospho-L-tyrosyl-[protein] + H2O = L-tyrosyl-[protein] + phosphate. The enzyme catalyses O-phospho-L-seryl-[protein] + H2O = L-seryl-[protein] + phosphate. It catalyses the reaction O-phospho-L-threonyl-[protein] + H2O = L-threonyl-[protein] + phosphate. Inactivates MAP kinases. Has a specificity for the ERK family. This is Dual specificity protein phosphatase 9 (DUSP9) from Homo sapiens (Human).